A 378-amino-acid polypeptide reads, in one-letter code: SWI/SNF-related matrix-associated actin-dependent regulator of chromatin subfamily B member 1 (378 aa).

The segment at 1–106 (MIMALSKTFG…DEKYKAVSIS (106 aa)) is DNA-binding.

It belongs to the SNF5 family. In terms of assembly, component of the multiprotein chromatin-remodeling complexes SWI/SNF. Component of neural progenitors-specific chromatin remodeling complex (npBAF complex) and the neuron-specific chromatin remodeling complex (nBAF complex). Component of the BAF (SWI/SNF) chromatin remodeling complex. Component of the SWI/SNF-B (PBAF) chromatin remodeling complex. Binds to double-stranded DNA.

It is found in the nucleus. In terms of biological role, involved in chromatin-remodeling. Core component of the BAF (SWI/SNF) complex. This ATP-dependent chromatin-remodeling complex plays important roles in cell proliferation and differentiation, in cellular antiviral activities and inhibition of tumor formation. Belongs to the neural progenitors-specific chromatin remodeling complex (npBAF complex) and the neuron-specific chromatin remodeling complex (nBAF complex) and may play a role in neural development. This chain is SWI/SNF-related matrix-associated actin-dependent regulator of chromatin subfamily B member 1 (smarcb1), found in Xenopus laevis (African clawed frog).